The following is a 250-amino-acid chain: Vitamin B12 import ATP-binding protein BtuD (250 aa).

The region spanning 3 to 233 is the ABC transporter domain; sequence LRQASVLPRL…EVLSPVFGVA (231 aa). 29–36 contributes to the ATP binding site; that stretch reads GPNGAGKS.

It belongs to the ABC transporter superfamily. Vitamin B12 importer (TC 3.A.1.13.1) family. In terms of assembly, the complex is composed of two ATP-binding proteins (BtuD), two transmembrane proteins (BtuC) and a solute-binding protein (BtuF).

It is found in the cell inner membrane. It carries out the reaction an R-cob(III)alamin(out) + ATP + H2O = an R-cob(III)alamin(in) + ADP + phosphate + H(+). In terms of biological role, part of the ABC transporter complex BtuCDF involved in vitamin B12 import. Responsible for energy coupling to the transport system. The protein is Vitamin B12 import ATP-binding protein BtuD of Pectobacterium atrosepticum (strain SCRI 1043 / ATCC BAA-672) (Erwinia carotovora subsp. atroseptica).